The chain runs to 189 residues: Elongation factor P (189 aa).

Residue Lys-34 is modified to N6-(3,6-diaminohexanoyl)-5-hydroxylysine.

The protein belongs to the elongation factor P family. May be beta-lysylated on the epsilon-amino group of Lys-34 by the combined action of EpmA and EpmB, and then hydroxylated on the C5 position of the same residue by EpmC (if this protein is present). Lysylation is critical for the stimulatory effect of EF-P on peptide-bond formation. The lysylation moiety may extend toward the peptidyltransferase center and stabilize the terminal 3-CCA end of the tRNA. Hydroxylation of the C5 position on Lys-34 may allow additional potential stabilizing hydrogen-bond interactions with the P-tRNA.

Its subcellular location is the cytoplasm. It functions in the pathway protein biosynthesis; polypeptide chain elongation. In terms of biological role, involved in peptide bond synthesis. Alleviates ribosome stalling that occurs when 3 or more consecutive Pro residues or the sequence PPG is present in a protein, possibly by augmenting the peptidyl transferase activity of the ribosome. Modification of Lys-34 is required for alleviation. The chain is Elongation factor P from Francisella tularensis subsp. novicida (strain U112).